The primary structure comprises 179 residues: Large ribosomal subunit protein uL5 (179 aa).

It belongs to the universal ribosomal protein uL5 family. In terms of assembly, part of the 50S ribosomal subunit; part of the 5S rRNA/L5/L18/L25 subcomplex. Contacts the 5S rRNA and the P site tRNA. Forms a bridge to the 30S subunit in the 70S ribosome.

Its function is as follows. This is one of the proteins that bind and probably mediate the attachment of the 5S RNA into the large ribosomal subunit, where it forms part of the central protuberance. In the 70S ribosome it contacts protein S13 of the 30S subunit (bridge B1b), connecting the 2 subunits; this bridge is implicated in subunit movement. Contacts the P site tRNA; the 5S rRNA and some of its associated proteins might help stabilize positioning of ribosome-bound tRNAs. The protein is Large ribosomal subunit protein uL5 of Polaromonas naphthalenivorans (strain CJ2).